Reading from the N-terminus, the 360-residue chain is DNA replication and repair protein RecF (360 aa).

30–37 (GHNGSGKT) is a binding site for ATP.

It belongs to the RecF family.

It is found in the cytoplasm. Functionally, the RecF protein is involved in DNA metabolism; it is required for DNA replication and normal SOS inducibility. RecF binds preferentially to single-stranded, linear DNA. It also seems to bind ATP. The polypeptide is DNA replication and repair protein RecF (Haemophilus ducreyi (strain 35000HP / ATCC 700724)).